Here is an 88-residue protein sequence, read N- to C-terminus: Putative sulfur carrier protein AF_0554 (88 aa).

Cys26 acts as the Cysteine persulfide intermediate in catalysis.

It belongs to the sulfur carrier protein TusA family.

In Archaeoglobus fulgidus (strain ATCC 49558 / DSM 4304 / JCM 9628 / NBRC 100126 / VC-16), this protein is Putative sulfur carrier protein AF_0554.